A 271-amino-acid chain; its full sequence is Orotidine 5'-phosphate decarboxylase (271 aa).

Lys95 functions as the Proton donor in the catalytic mechanism.

It belongs to the OMP decarboxylase family. Type 2 subfamily.

The enzyme catalyses orotidine 5'-phosphate + H(+) = UMP + CO2. The protein operates within pyrimidine metabolism; UMP biosynthesis via de novo pathway; UMP from orotate: step 2/2. The sequence is that of Orotidine 5'-phosphate decarboxylase (pyrF) from Ralstonia nicotianae (strain ATCC BAA-1114 / GMI1000) (Ralstonia solanacearum).